The sequence spans 447 residues: Phosphoglucosamine mutase (447 aa).

Ser-100 (phosphoserine intermediate) is an active-site residue. Residues Ser-100, Asp-240, Asp-242, and Asp-244 each coordinate Mg(2+). At Ser-100 the chain carries Phosphoserine.

The protein belongs to the phosphohexose mutase family. Mg(2+) is required as a cofactor. In terms of processing, activated by phosphorylation.

The enzyme catalyses alpha-D-glucosamine 1-phosphate = D-glucosamine 6-phosphate. Catalyzes the conversion of glucosamine-6-phosphate to glucosamine-1-phosphate. This chain is Phosphoglucosamine mutase, found in Anoxybacillus flavithermus (strain DSM 21510 / WK1).